Consider the following 431-residue polypeptide: Islet cell autoantigen 1-like protein (431 aa).

The 204-residue stretch at 44–247 (ASDAELDAKL…TAQMMTQIQE (204 aa)) folds into the AH domain. Disordered stretches follow at residues 295–316 (EEEEEERFEREPAVARALPRDS) and 351–372 (CGSPCTGLTSQEPSVGPGSLTS). Positions 301–316 (RFEREPAVARALPRDS) are enriched in basic and acidic residues. Residues 356–372 (TGLTSQEPSVGPGSLTS) show a composition bias toward polar residues.

This chain is Islet cell autoantigen 1-like protein (Ica1l), found in Mus musculus (Mouse).